The following is a 734-amino-acid chain: Photosystem I P700 chlorophyll a apoprotein A2 (734 aa).

Transmembrane regions (helical) follow at residues 46–69, 135–158, 175–199, 273–291, 330–353, 369–395, 417–439, and 517–535; these read IFAS…FHVA, LYTG…LHLQ, LNHH…HVAI, IAHH…GHMY, IHFQ…QHMY, AALY…IFFI, AIIS…LYVH, and FLVH…LILV. Residues Cys-559 and Cys-568 each contribute to the [4Fe-4S] cluster site. A run of 2 helical transmembrane segments spans residues 575-596 and 643-665; these read AFYL…YWHW and LSVW…MFLI. His-654, Met-662, and Tyr-670 together coordinate chlorophyll a. Trp-671 contributes to the phylloquinone binding site. A helical transmembrane segment spans residues 707-727; it reads LVGLAHFSVGYIFTYAAFLIA.

It belongs to the PsaA/PsaB family. The PsaA/B heterodimer binds the P700 chlorophyll special pair and subsequent electron acceptors. PSI consists of a core antenna complex that captures photons, and an electron transfer chain that converts photonic excitation into a charge separation. The eukaryotic PSI reaction center is composed of at least 11 subunits. P700 is a chlorophyll a/chlorophyll a' dimer, A0 is one or more chlorophyll a, A1 is one or both phylloquinones and FX is a shared 4Fe-4S iron-sulfur center. serves as cofactor.

The protein localises to the plastid. It localises to the chloroplast thylakoid membrane. The enzyme catalyses reduced [plastocyanin] + hnu + oxidized [2Fe-2S]-[ferredoxin] = oxidized [plastocyanin] + reduced [2Fe-2S]-[ferredoxin]. Functionally, psaA and PsaB bind P700, the primary electron donor of photosystem I (PSI), as well as the electron acceptors A0, A1 and FX. PSI is a plastocyanin-ferredoxin oxidoreductase, converting photonic excitation into a charge separation, which transfers an electron from the donor P700 chlorophyll pair to the spectroscopically characterized acceptors A0, A1, FX, FA and FB in turn. Oxidized P700 is reduced on the lumenal side of the thylakoid membrane by plastocyanin. The polypeptide is Photosystem I P700 chlorophyll a apoprotein A2 (Pelargonium hortorum (Common geranium)).